Here is a 428-residue protein sequence, read N- to C-terminus: Tyrosine--tRNA ligase (428 aa).

Tyrosine 41 provides a ligand contact to L-tyrosine. Positions 46 to 55 (PTADSLHLGH) match the 'HIGH' region motif. Positions 179 and 183 each coordinate L-tyrosine. A 'KMSKS' region motif is present at residues 239-243 (KFGKT). Residue lysine 242 coordinates ATP. The 58-residue stretch at 361-418 (ADLMQALVDAELQPSRGQARKTIASNAVTINGEKQSDPEYIFNDEDRLFGRYTLLRRG) folds into the S4 RNA-binding domain.

The protein belongs to the class-I aminoacyl-tRNA synthetase family. TyrS type 1 subfamily. Homodimer.

The protein resides in the cytoplasm. It carries out the reaction tRNA(Tyr) + L-tyrosine + ATP = L-tyrosyl-tRNA(Tyr) + AMP + diphosphate + H(+). In terms of biological role, catalyzes the attachment of tyrosine to tRNA(Tyr) in a two-step reaction: tyrosine is first activated by ATP to form Tyr-AMP and then transferred to the acceptor end of tRNA(Tyr). This chain is Tyrosine--tRNA ligase, found in Salmonella paratyphi C (strain RKS4594).